The following is a 672-amino-acid chain: Nuclear RNA export factor 1 (672 aa).

Disordered stretches follow at residues 1 to 52 (MPKR…SFKP) and 73 to 101 (DEDDDMSDMTTAVKDRPTSRRRGSPIPRG). Positions 40–49 (RKDRNKRRVS) are enriched in basic residues. Residues 113 to 193 (WYQVTLQNAQ…PRVRSGIPLV (81 aa)) enclose the RRM domain. LRR repeat units lie at residues 255–280 (DLEALNLNDNSISSMEAFKGVEKRLP), 281–304 (NLKILYLGDNKIPSLAHLVVLRNL), 305–332 (SILELVLKNNPCRSRYKDSQQFISEVRR), and 333–360 (KFPKLVKLDGETLEPQITFDLSEQGRLL). An NTF2 domain is found at 375 to 529 (VVRQFLDQYF…FCIRNETIFI (155 aa)). The segment at 541–564 (KRSQHQPAPGAMPSTSSAVTSPQA) is disordered. Polar residues predominate over residues 553–563 (PSTSSAVTSPQ). Residue Ser561 is modified to Phosphoserine. In terms of domain architecture, TAP-C spans 618–672 (STKMQMIEAMSAQSQMNVIWSRKCLEETNWDFNHAAFVFEKLFKENKIPPEAFMK).

The protein belongs to the NXF family. Interacts with Nxt1. Interacts with ZC3H3. Forms a complex with Nup358/RanBP2, RanGAP and Nxt1. Interacts with Nup54 and Nup58. Interacts with Orc3 and Hpr1. As to expression, expressed ubiquitously.

The protein localises to the nucleus. The protein resides in the nucleoplasm. Its subcellular location is the cytoplasm. It localises to the nucleus envelope. In terms of biological role, mediates the export of the majority of mRNAs from the nucleus to the cytoplasm. In ovarian follicle cells, plays a role in transposable element silencing regulation by enabling the nuclear export of flamenco (flam) transcripts and subsequent piRNA biogenesis. This is Nuclear RNA export factor 1 from Drosophila melanogaster (Fruit fly).